The sequence spans 491 residues: Transmembrane protein 200A (491 aa).

At 1 to 61 (MIATGGVITG…RGKIRLYSPS (61 aa)) the chain is on the cytoplasmic side. Positions 16 to 41 (RQDSARSQQHVNLSPSPATQEKKPIR) are disordered. Polar residues predominate over residues 20–34 (ARSQQHVNLSPSPAT). Residues 62–82 (GFFLILGVLISIIGIAMAVLG) traverse the membrane as a helical segment. The Extracellular segment spans residues 83–126 (YWPQKEHFIDAETTLSTNETQVIRNEGGVVVRFFEQHLHSDKMK). N-linked (GlcNAc...) asparagine glycosylation occurs at asparagine 100. The chain crosses the membrane as a helical span at residues 127–147 (MLGPFTMGIGIFIFICANAIL). Over 148-491 (HENRDKETKI…LKRGTSETRF (344 aa)) the chain is Cytoplasmic. Serine 350 bears the Phosphoserine mark.

Belongs to the TMEM200 family. In terms of tissue distribution, expressed in cerebellum.

The protein resides in the membrane. This is Transmembrane protein 200A (TMEM200A) from Homo sapiens (Human).